We begin with the raw amino-acid sequence, 298 residues long: uncharacterized protein (298 aa).

This is an uncharacterized protein from Acanthamoeba polyphaga mimivirus (APMV).